An 840-amino-acid polypeptide reads, in one-letter code: Phosphatidylglycerol lysyltransferase (840 aa).

At 1–8 (MNQEVKNK) the chain is on the cytoplasmic side. Residues 9–29 (IFSILKITFATALFIFVAITL) traverse the membrane as a helical segment. Over 30 to 52 (YRELSGINFKDTLVEFSKINRMS) the chain is Extracellular. Residues 53 to 73 (LVLLFIGGGASLVILSMYDVI) form a helical membrane-spanning segment. Residues 74-89 (LSRALKMDISLGKVLR) lie on the Cytoplasmic side of the membrane. The chain crosses the membrane as a helical span at residues 90–110 (VSYIINALNAIVGFGGFIGAG). The Extracellular portion of the chain corresponds to 111–128 (VRAMVYKNYTHDKKKLVH). Residues 129–149 (FISLILISMLTGLSLLSLLIV) traverse the membrane as a helical segment. The Cytoplasmic portion of the chain corresponds to 150-161 (FHVFDASLILDK). A helical transmembrane segment spans residues 162–182 (ITWVRWVLYVVSFFLPLFIIY). Topologically, residues 183–200 (SMVRPPDKNNRFVGLYCT) are extracellular. The helical transmembrane segment at 201 to 221 (LVSCVEWLAAAVVLYFCGVIV) threads the bilayer. Topologically, residues 222-229 (DAHVSFMS) are cytoplasmic. Residues 230–250 (FIAIFIIAALSGLVSFIPGGF) form a helical membrane-spanning segment. Residues 251–271 (GAFDLVVLLGFKTLGVPEEKV) lie on the Extracellular side of the membrane. The helical transmembrane segment at 272–292 (LLMLLLYRFAYYFVPVIIALI) threads the bilayer. Over 293–337 (LSSFEFGTSAKKYIEGSKYFIPAKDVTSFLMSYQKDIIAKIPSLS) the chain is Cytoplasmic. A helical transmembrane segment spans residues 338-358 (LAILVFFTSMIFFVNNLTIVY). The Extracellular portion of the chain corresponds to 359-369 (DALYDGNHLTY). A helical transmembrane segment spans residues 370-390 (YILLAIHTSACLLLLLNVVGI). Residues 391 to 394 (YKQS) are Cytoplasmic-facing. 2 helical membrane-spanning segments follow: residues 395-415 (RRAIIFAMISILLITVATFFT) and 416-436 (YASYILITWLAIIFVLLIVAF). Residues 437 to 450 (RRARRLKRPVRMRN) lie on the Cytoplasmic side of the membrane. A helical transmembrane segment spans residues 451–471 (IVAMLLFSLFILYVNHIFIAG). Over 472–489 (TLYALDIYTIEMHTSVLR) the chain is Extracellular. Residues 490-510 (YYFWLTILIIAIIIGMIAWLF) traverse the membrane as a helical segment. At 511–840 (DYQFSKVRIS…SKVMRVIRHK (330 aa)) the chain is on the cytoplasmic side.

Belongs to the LPG synthase family.

The protein resides in the cell membrane. The catalysed reaction is L-lysyl-tRNA(Lys) + a 1,2-diacyl-sn-glycero-3-phospho-(1'-sn-glycerol) = a 1,2-diacyl-sn-glycero-3-phospho-1'-(3'-O-L-lysyl)-sn-glycerol + tRNA(Lys). In terms of biological role, catalyzes the transfer of a lysyl group from L-lysyl-tRNA(Lys) to membrane-bound phosphatidylglycerol (PG), which produces lysylphosphatidylglycerol (LPG), a major component of the bacterial membrane with a positive net charge. LPG synthesis contributes to bacterial virulence as it is involved in the resistance mechanism against cationic antimicrobial peptides (CAMP) produces by the host's immune system (defensins, cathelicidins) and by the competing microorganisms (bacteriocins). In fact, the modification of anionic phosphatidylglycerol with positively charged L-lysine results in repulsion of the peptides. This Staphylococcus aureus (strain Mu50 / ATCC 700699) protein is Phosphatidylglycerol lysyltransferase (mprF).